A 73-amino-acid polypeptide reads, in one-letter code: Adipokinetic prohormone type 2 (73 aa).

An N-terminal signal peptide occupies residues 1–20 (MCRIFIVLLVVAALAIIIEG). Pyrrolidone carboxylic acid is present on Q21. At N30 the chain carries Asparagine amide. A propeptide spanning residues 34-73 (SISSEQINDDCNPEEAIFQIYKLIVSEGERIRACQRDGKM) is cleaved from the precursor.

In terms of tissue distribution, expressed in corpora cardiaca (CC), corpora allata (CA) and gnathal ganglion (GNG) (at protein level). Expression in CC and CA detected in all animals, expression in GNG detected in few animals (at protein level). Not expressed in antennal lobe (AL) (at protein level).

The protein resides in the secreted. Its function is as follows. This hormone, released from cells in the corpora cardiaca, causes release of diglycerides from the fat body and stimulation of muscles to use these diglycerides as an energy source during energy-demanding processes. The chain is Adipokinetic prohormone type 2 from Agrotis ipsilon (Black cutworm moth).